We begin with the raw amino-acid sequence, 473 residues long: Mediator of RNA polymerase II transcription subunit 29 (473 aa).

Positions 1–12 (MSGQGPPSNLTP) are enriched in polar residues. 2 disordered regions span residues 1–319 (MSGQ…NEEQ) and 444–473 (STME…EMAE). The span at 13–50 (QQQHMIMQQQQQQQMMRQQQIQQQQLHQRQLQQQQAQQ) shows a compositional bias: low complexity. Over residues 51–62 (SYQRSRTPQMQQ) the composition is skewed to polar residues. 2 stretches are compositionally biased toward low complexity: residues 111–123 (QMMQ…NQPM) and 130–139 (VSRPGSVAPP). 2 stretches are compositionally biased toward polar residues: residues 148 to 183 (TGPS…QQSH) and 255 to 269 (PPGS…QPGS). 2 stretches are compositionally biased toward low complexity: residues 272–286 (APGS…QPPA) and 294–308 (AASG…AAPA).

This sequence belongs to the Mediator complex subunit 29 family. In terms of assembly, component of the Mediator complex.

It is found in the nucleus. In terms of biological role, component of the Mediator complex, a coactivator involved in the regulated transcription of nearly all RNA polymerase II-dependent genes. Mediator functions as a bridge to convey information from gene-specific regulatory proteins to the basal RNA polymerase II transcription machinery. Mediator is recruited to promoters by direct interactions with regulatory proteins and serves as a scaffold for the assembly of a functional preinitiation complex with RNA polymerase II and the general transcription factors. The polypeptide is Mediator of RNA polymerase II transcription subunit 29 (mdt-29) (Caenorhabditis briggsae).